Consider the following 232-residue polypeptide: NAD(P)H-quinone oxidoreductase subunit K 1 (232 aa).

[4Fe-4S] cluster is bound by residues Cys49, Cys50, Cys114, and Cys145.

This sequence belongs to the complex I 20 kDa subunit family. In terms of assembly, NDH-1 can be composed of about 15 different subunits; different subcomplexes with different compositions have been identified which probably have different functions. Requires [4Fe-4S] cluster as cofactor.

It localises to the cellular thylakoid membrane. The catalysed reaction is a plastoquinone + NADH + (n+1) H(+)(in) = a plastoquinol + NAD(+) + n H(+)(out). It carries out the reaction a plastoquinone + NADPH + (n+1) H(+)(in) = a plastoquinol + NADP(+) + n H(+)(out). Functionally, NDH-1 shuttles electrons from an unknown electron donor, via FMN and iron-sulfur (Fe-S) centers, to quinones in the respiratory and/or the photosynthetic chain. The immediate electron acceptor for the enzyme in this species is believed to be plastoquinone. Couples the redox reaction to proton translocation, and thus conserves the redox energy in a proton gradient. Cyanobacterial NDH-1 also plays a role in inorganic carbon-concentration. The chain is NAD(P)H-quinone oxidoreductase subunit K 1 from Acaryochloris marina (strain MBIC 11017).